We begin with the raw amino-acid sequence, 500 residues long: 4-aminobutyrate aminotransferase, mitochondrial (500 aa).

Residues methionine 1–isoleucine 28 constitute a mitochondrion transit peptide. Residue cysteine 163 participates in [2Fe-2S] cluster binding. Glycine 164–serine 165 is a binding site for pyridoxal 5'-phosphate. Position 166 (cysteine 166) interacts with [2Fe-2S] cluster. Position 220 (arginine 220) interacts with substrate. Residue lysine 231 is modified to N6-succinyllysine. The residue at position 252 (lysine 252) is an N6-acetyllysine; alternate. The residue at position 252 (lysine 252) is an N6-succinyllysine; alternate. Lysine 279 and lysine 318 each carry N6-acetyllysine. Lysine 357 is subject to N6-(pyridoxal phosphate)lysine. Position 381 (threonine 381) interacts with pyridoxal 5'-phosphate. Residue lysine 413 is modified to N6-acetyllysine; alternate. The residue at position 413 (lysine 413) is an N6-succinyllysine; alternate. An N6-acetyllysine mark is found at lysine 452 and lysine 470.

This sequence belongs to the class-III pyridoxal-phosphate-dependent aminotransferase family. In terms of assembly, homodimer; disulfide-linked. Pyridoxal 5'-phosphate is required as a cofactor. Requires [2Fe-2S] cluster as cofactor.

Its subcellular location is the mitochondrion matrix. The enzyme catalyses 4-aminobutanoate + 2-oxoglutarate = succinate semialdehyde + L-glutamate. The catalysed reaction is (S)-3-amino-2-methylpropanoate + 2-oxoglutarate = 2-methyl-3-oxopropanoate + L-glutamate. Catalyzes the conversion of gamma-aminobutyrate and L-beta-aminoisobutyrate to succinate semialdehyde and methylmalonate semialdehyde, respectively. Can also convert delta-aminovalerate and beta-alanine. This chain is 4-aminobutyrate aminotransferase, mitochondrial (ABAT), found in Bos taurus (Bovine).